The sequence spans 254 residues: Gamma-glutamyl-gamma-aminobutyrate hydrolase PuuD (254 aa).

The region spanning R16–E250 is the Glutamine amidotransferase type-1 domain. The Nucleophile role is filled by C114. Catalysis depends on residues H222 and E224.

This sequence belongs to the peptidase C26 family. As to quaternary structure, homodimer.

It catalyses the reaction 4-(gamma-L-glutamylamino)butanoate + H2O = 4-aminobutanoate + L-glutamate. It functions in the pathway amine and polyamine degradation; putrescine degradation; 4-aminobutanoate from putrescine: step 4/4. In terms of biological role, involved in the breakdown of putrescine via hydrolysis of the gamma-glutamyl linkage of gamma-glutamyl-gamma-aminobutyrate. The polypeptide is Gamma-glutamyl-gamma-aminobutyrate hydrolase PuuD (puuD) (Escherichia coli (strain K12)).